A 263-amino-acid chain; its full sequence is Isatin hydrolase (263 aa).

62–66 (FFAWN) provides a ligand contact to substrate. Mn(2+)-binding residues include His-73, His-77, and Asp-79. His-83 (proton donor/acceptor) is an active-site residue. His-212 is a substrate binding site.

Belongs to the Cyclase 1 superfamily. Homodimer. The cofactor is Mn(2+).

The enzyme catalyses isatin + H2O = isatinate + H(+). Its activity is regulated as follows. Inhibited by thioisatinate. Its function is as follows. Involved in the degradation of the plant hormone indole-3-acetic acid (IAA). Catalyzes the hydrolysis of the cyclic amide bond (lactam) of isatin (1H-indole-2,3-dione) to yield isatinate (2-(2-aminophenyl)-2-oxoacetate). The protein is Isatin hydrolase of Roseibium aggregatum (strain ATCC 25650 / DSM 13394 / JCM 20685 / NBRC 16684 / NCIMB 2208 / IAM 12614 / B1) (Stappia aggregata).